The sequence spans 925 residues: Nonribosomal peptide synthetase apvA (925 aa).

The segment at 15–436 (AREDSGHVVV…TGRAKENMII (422 aa)) is adenylation (A) domain. Residues 564–644 (EPQNDLEKTL…DLATALEKLQ (81 aa)) enclose the Carrier domain. At S601 the chain carries O-(pantetheine 4'-phosphoryl)serine. The tract at residues 663–909 (PLWLVHPGAG…HYSMIGPDHV (247 aa)) is thioesterase (TE) domain.

This sequence belongs to the NRP synthetase family. ApvA specifically produces aspulvinone E in hyphea, in contrast to melA which produces aspulvinone E in conidia where it is converted to UV-protective Asp-melanin.

It carries out the reaction 2 3-(4-hydroxyphenyl)pyruvate + AH2 + 2 ATP + O2 = aspulvinone E + A + 2 AMP + CO2 + 2 diphosphate + H2O + H(+). Its pathway is secondary metabolite biosynthesis. Functionally, nonribosomal peptide synthetase; part of the gene cluster that mediates the biosynthesis of aspulvinones. The nonribosomal peptide synthetase apvA is responsible for the production of aspulvinone E, the core structure of aspulvinones. ApvA first activates 4-hydroxyphenylpyruvate (HPPA) through its A domain to AMP-HPPA. The HPPA unit is then loaded to the T domain and eventually transferred to the TE domain. Upon loading of another HPPA unit to the T domain, the TE domain promotes the enolate formation on the unit attached. The next step involves head to tail Claisen condensation, followed by the keto-enol tautermerization and a nucleophilic attack on the carbonyl carbon to yield the furanone partial structure. A spontaneous oxidation at the beta-carbon of the thioester might occur in aerobic condition. The TE domain then catalyzes the hydrolysis of the thioester, followed by spontaneous decarboxylation, dehydroxylation and keto-enol tautermerization to give the aspulvinone core. Aspulvinone E is highly unstable and converted to isoaspulvinone E in the presence of light. The structural diversity of the aspulvinones suggests that other tailoring enzymes are involved and have still to be identified. This Aspergillus terreus (strain NIH 2624 / FGSC A1156) protein is Nonribosomal peptide synthetase apvA.